Here is a 176-residue protein sequence, read N- to C-terminus: NAD(P)H-quinone oxidoreductase subunit 6, chloroplastic (176 aa).

A run of 5 helical transmembrane segments spans residues F10–T30, P32–L52, A61–M81, L92–I112, and F152–A172.

This sequence belongs to the complex I subunit 6 family. NDH is composed of at least 16 different subunits, 5 of which are encoded in the nucleus.

The protein resides in the plastid. It is found in the chloroplast thylakoid membrane. The enzyme catalyses a plastoquinone + NADH + (n+1) H(+)(in) = a plastoquinol + NAD(+) + n H(+)(out). The catalysed reaction is a plastoquinone + NADPH + (n+1) H(+)(in) = a plastoquinol + NADP(+) + n H(+)(out). Functionally, NDH shuttles electrons from NAD(P)H:plastoquinone, via FMN and iron-sulfur (Fe-S) centers, to quinones in the photosynthetic chain and possibly in a chloroplast respiratory chain. The immediate electron acceptor for the enzyme in this species is believed to be plastoquinone. Couples the redox reaction to proton translocation, and thus conserves the redox energy in a proton gradient. The protein is NAD(P)H-quinone oxidoreductase subunit 6, chloroplastic (ndhG) of Gossypium hirsutum (Upland cotton).